A 185-amino-acid polypeptide reads, in one-letter code: ATP synthase subunit b, chloroplastic (185 aa).

Residues 31–53 (IINITVVLGILIYFGKGVLSNLL) traverse the membrane as a helical segment.

The protein belongs to the ATPase B chain family. As to quaternary structure, F-type ATPases have 2 components, F(1) - the catalytic core - and F(0) - the membrane proton channel. F(1) has five subunits: alpha(3), beta(3), gamma(1), delta(1), epsilon(1). F(0) has four main subunits: a(1), b(1), b'(1) and c(10-14). The alpha and beta chains form an alternating ring which encloses part of the gamma chain. F(1) is attached to F(0) by a central stalk formed by the gamma and epsilon chains, while a peripheral stalk is formed by the delta, b and b' chains.

The protein localises to the plastid. It is found in the chloroplast thylakoid membrane. F(1)F(0) ATP synthase produces ATP from ADP in the presence of a proton or sodium gradient. F-type ATPases consist of two structural domains, F(1) containing the extramembraneous catalytic core and F(0) containing the membrane proton channel, linked together by a central stalk and a peripheral stalk. During catalysis, ATP synthesis in the catalytic domain of F(1) is coupled via a rotary mechanism of the central stalk subunits to proton translocation. Its function is as follows. Component of the F(0) channel, it forms part of the peripheral stalk, linking F(1) to F(0). In Gnetum parvifolium (Small-leaved jointfir), this protein is ATP synthase subunit b, chloroplastic.